The following is a 315-amino-acid chain: L-lactate dehydrogenase (315 aa).

3 residues coordinate NAD(+): valine 14, aspartate 35, and tyrosine 66. Substrate is bound by residues glutamine 83, arginine 89, and 121–124 (NPVD). NAD(+) is bound by residues 119 to 121 (VAN) and serine 144. 149–152 (DTAR) provides a ligand contact to substrate. Histidine 176 acts as the Proton acceptor in catalysis. Tyrosine 221 is modified (phosphotyrosine). Threonine 230 is a binding site for substrate.

The protein belongs to the LDH/MDH superfamily. LDH family. In terms of assembly, homotetramer.

The protein resides in the cytoplasm. The enzyme catalyses (S)-lactate + NAD(+) = pyruvate + NADH + H(+). It participates in fermentation; pyruvate fermentation to lactate; (S)-lactate from pyruvate: step 1/1. Its function is as follows. Catalyzes the conversion of lactate to pyruvate. This Mesomycoplasma hyopneumoniae (strain 7448) (Mycoplasma hyopneumoniae) protein is L-lactate dehydrogenase.